The following is a 463-amino-acid chain: Putative F-box protein At3g29830 (463 aa).

In terms of domain architecture, F-box spans 7 to 55 (RDRISSLPDVVLVMILSFLSFKDNVKTSILSKRWRNICYEAKNISFKES).

The polypeptide is Putative F-box protein At3g29830 (Arabidopsis thaliana (Mouse-ear cress)).